The sequence spans 230 residues: Uracil-DNA glycosylase (230 aa).

Aspartate 72 acts as the Proton acceptor in catalysis.

It belongs to the uracil-DNA glycosylase (UDG) superfamily. UNG family.

It localises to the cytoplasm. The catalysed reaction is Hydrolyzes single-stranded DNA or mismatched double-stranded DNA and polynucleotides, releasing free uracil.. Excises uracil residues from the DNA which can arise as a result of misincorporation of dUMP residues by DNA polymerase or due to deamination of cytosine. This chain is Uracil-DNA glycosylase, found in Wolinella succinogenes (strain ATCC 29543 / DSM 1740 / CCUG 13145 / JCM 31913 / LMG 7466 / NCTC 11488 / FDC 602W) (Vibrio succinogenes).